Reading from the N-terminus, the 343-residue chain is tRNA N6-adenosine threonylcarbamoyltransferase (343 aa).

Residues His-115 and His-119 each contribute to the Fe cation site. Residues Leu-138–Ala-142, Asp-171, Gly-184, and Asn-276 contribute to the substrate site. Asp-304 is a binding site for Fe cation.

It belongs to the KAE1 / TsaD family. The cofactor is Fe(2+).

The protein localises to the cytoplasm. It carries out the reaction L-threonylcarbamoyladenylate + adenosine(37) in tRNA = N(6)-L-threonylcarbamoyladenosine(37) in tRNA + AMP + H(+). Its function is as follows. Required for the formation of a threonylcarbamoyl group on adenosine at position 37 (t(6)A37) in tRNAs that read codons beginning with adenine. Is involved in the transfer of the threonylcarbamoyl moiety of threonylcarbamoyl-AMP (TC-AMP) to the N6 group of A37, together with TsaE and TsaB. TsaD likely plays a direct catalytic role in this reaction. This chain is tRNA N6-adenosine threonylcarbamoyltransferase, found in Buchnera aphidicola subsp. Cinara cedri (strain Cc).